Reading from the N-terminus, the 607-residue chain is Lipid-A-disaccharide synthase (607 aa).

Positions 1-224 (MFPQKITLWL…ASREAFRKPF (224 aa)) are unknown. The lipid-A-disaccharide synthase stretch occupies residues 225–607 (SNSCFISAGE…CLSLIFETAS (383 aa)).

In the C-terminal section; belongs to the LpxB family.

It carries out the reaction a lipid X + a UDP-2-N,3-O-bis[(3R)-3-hydroxyacyl]-alpha-D-glucosamine = a lipid A disaccharide + UDP + H(+). It functions in the pathway bacterial outer membrane biogenesis; LPS lipid A biosynthesis. Its function is as follows. Condensation of UDP-2,3-diacylglucosamine and 2,3-diacylglucosamine-1-phosphate to form lipid A disaccharide, a precursor of lipid A, a phosphorylated glycolipid that anchors the lipopolysaccharide to the outer membrane of the cell. This is Lipid-A-disaccharide synthase (lpxB) from Chlamydia trachomatis serovar A (strain ATCC VR-571B / DSM 19440 / HAR-13).